The primary structure comprises 357 residues: Glutamine synthetase root isozyme B (357 aa).

Residues 19–99 form the GS beta-grasp domain; that stretch reads IIAEYIWVGG…VICDVYTPAG (81 aa). The 252-residue stretch at 106 to 357 folds into the GS catalytic domain; sequence KRYNAAKIFS…AETTILWKKS (252 aa).

The protein belongs to the glutamine synthetase family. Homooctamer.

The protein localises to the cytoplasm. It catalyses the reaction L-glutamate + NH4(+) + ATP = L-glutamine + ADP + phosphate + H(+). This chain is Glutamine synthetase root isozyme B (GS3B), found in Pisum sativum (Garden pea).